The primary structure comprises 215 residues: N-(5'-phosphoribosyl)anthranilate isomerase (215 aa).

The protein belongs to the TrpF family.

It catalyses the reaction N-(5-phospho-beta-D-ribosyl)anthranilate = 1-(2-carboxyphenylamino)-1-deoxy-D-ribulose 5-phosphate. It functions in the pathway amino-acid biosynthesis; L-tryptophan biosynthesis; L-tryptophan from chorismate: step 3/5. The polypeptide is N-(5'-phosphoribosyl)anthranilate isomerase (Rippkaea orientalis (strain PCC 8801 / RF-1) (Cyanothece sp. (strain PCC 8801))).